The sequence spans 306 residues: UDP-3-O-acyl-N-acetylglucosamine deacetylase (306 aa).

Zn(2+) contacts are provided by His-79, His-238, and Asp-242. His-265 serves as the catalytic Proton donor.

Belongs to the LpxC family. Requires Zn(2+) as cofactor.

It catalyses the reaction a UDP-3-O-[(3R)-3-hydroxyacyl]-N-acetyl-alpha-D-glucosamine + H2O = a UDP-3-O-[(3R)-3-hydroxyacyl]-alpha-D-glucosamine + acetate. The protein operates within glycolipid biosynthesis; lipid IV(A) biosynthesis; lipid IV(A) from (3R)-3-hydroxytetradecanoyl-[acyl-carrier-protein] and UDP-N-acetyl-alpha-D-glucosamine: step 2/6. In terms of biological role, catalyzes the hydrolysis of UDP-3-O-myristoyl-N-acetylglucosamine to form UDP-3-O-myristoylglucosamine and acetate, the committed step in lipid A biosynthesis. In Shewanella denitrificans (strain OS217 / ATCC BAA-1090 / DSM 15013), this protein is UDP-3-O-acyl-N-acetylglucosamine deacetylase.